The sequence spans 261 residues: MSVISMKQLLEAGVHFGHQTRRWNPKMKPFIFTERNGIYIIDLQKTVKLIDNAYNFVKDVAANDGVVLFVGTKKQAQTAIEEEAKRAGQFYVNHRWLGGTLTNWNTIQKRIKRLKDLKKMEEDGTFDRLPKKEVALLNKQKDKLEKFLGGIEDMPHIPDVLFVVDPRKEQIAIKEAQKLNIPVVAMVDTNTDPDQVDVIIPSNDDAIRAVRLITSKMADAVVEGRQGEDDEAVQQEEVAEGVSKDSLEDLKKTVEEGSNEE.

The segment at Gly224–Glu261 is disordered. Residues Glu228–Ala239 are compositionally biased toward acidic residues. Over residues Val242–Glu255 the composition is skewed to basic and acidic residues.

Belongs to the universal ribosomal protein uS2 family.

The sequence is that of Small ribosomal subunit protein uS2 (rpsB) from Pediococcus acidilactici.